A 306-amino-acid polypeptide reads, in one-letter code: Beta-lactamase (306 aa).

The segment at residues Met1–Ala34 is a signal peptide (tat-type signal). Ser82 acts as the Acyl-ester intermediate in catalysis. Residue Lys250–Gly252 participates in substrate binding.

This sequence belongs to the class-A beta-lactamase family. In terms of processing, predicted to be exported by the Tat system. The position of the signal peptide cleavage has not been experimentally proven.

It catalyses the reaction a beta-lactam + H2O = a substituted beta-amino acid. The polypeptide is Beta-lactamase (blaF) (Streptomyces fradiae (Streptomyces roseoflavus)).